The chain runs to 151 residues: Ubiquitin-conjugating enzyme E2 W (151 aa).

M1 is covalently cross-linked (Peptide (Met-Gly) (interchain with G-Cter in ubiquitin)). Residues 3 to 151 (SMQKRLQKEL…TKWWYHDDTC (149 aa)) enclose the UBC core domain. The active-site Glycyl thioester intermediate is the C91.

It belongs to the ubiquitin-conjugating enzyme family. As to quaternary structure, homodimer. Interacts with FANCL. Interacts with STUB1/CHIP. Post-translationally, ubiquitinated in vitro in the presence of FANCL. Autoubiquitinated at Met-1.

Its subcellular location is the nucleus. It carries out the reaction S-ubiquitinyl-[E1 ubiquitin-activating enzyme]-L-cysteine + [E2 ubiquitin-conjugating enzyme]-L-cysteine = [E1 ubiquitin-activating enzyme]-L-cysteine + S-ubiquitinyl-[E2 ubiquitin-conjugating enzyme]-L-cysteine.. It catalyses the reaction S-ubiquitinyl-[E1 ubiquitin-activating enzyme]-L-cysteine + [acceptor protein]-N-terminal-amino acid = [E1 ubiquitin-activating enzyme]-L-cysteine + N-terminal-ubiquitinyl-[acceptor protein].. The protein operates within protein modification; protein ubiquitination. Accepts ubiquitin from the E1 complex and catalyzes its covalent attachment to other proteins. Specifically monoubiquitinates the N-terminus of various substrates, including ATXN3, MAPT/TAU, POLR2H/RPB8 and STUB1/CHIP, by recognizing backbone atoms of disordered N-termini. Involved in degradation of misfolded chaperone substrates by mediating monoubiquitination of STUB1/CHIP, leading to recruitment of ATXN3 to monoubiquitinated STUB1/CHIP, and restriction of the length of ubiquitin chain attached to STUB1/CHIP substrates by ATXN3. After UV irradiation, but not after mitomycin-C (MMC) treatment, acts as a specific E2 ubiquitin-conjugating enzyme for the Fanconi anemia complex by associating with E3 ubiquitin-protein ligase FANCL and catalyzing monoubiquitination of FANCD2, a key step in the DNA damage pathway. In vitro catalyzes 'Lys-11'-linked polyubiquitination. UBE2W-catalyzed ubiquitination also occurs in the presence of inactive RING/U-box type E3s, i.e. lacking the active site cysteine residues to form thioester bonds with ubiquitin, or even in the absence of E3, albeit at a slower rate. The sequence is that of Ubiquitin-conjugating enzyme E2 W (UBE2W) from Bos taurus (Bovine).